A 189-amino-acid polypeptide reads, in one-letter code: Chitin synthase 2 (189 aa).

It belongs to the chitin synthase family. Class II subfamily.

Its subcellular location is the cell membrane. It catalyses the reaction [(1-&gt;4)-N-acetyl-beta-D-glucosaminyl](n) + UDP-N-acetyl-alpha-D-glucosamine = [(1-&gt;4)-N-acetyl-beta-D-glucosaminyl](n+1) + UDP + H(+). Functionally, polymerizes chitin, a structural polymer of the cell wall and septum, by transferring the sugar moiety of UDP-GlcNAc to the non-reducing end of the growing chitin polymer. The protein is Chitin synthase 2 (CHS2) of Xylohypha bantiana.